The chain runs to 1485 residues: Chromosome partition protein MukB (1485 aa).

34–41 is an ATP binding site; it reads GGNGAGKS. Coiled-coil stretches lie at residues 337–480, 509–605, 780–805, 835–915, 977–1116, and 1210–1235; these read LNLV…QAYQ, QHLA…PVWL, RAARENRLETLYQERDRLAERYATLS, EAEI…IQQH, GMLT…AKAG, and EAIEQMEIELGRLTEELTAREQKLAI. The segment at 666 to 783 is flexible hinge; the sequence is PSGAEDARLI…EVPLFGRAAR (118 aa).

The protein belongs to the SMC family. MukB subfamily. As to quaternary structure, homodimerization via its hinge domain. Binds to DNA via its C-terminal region. Interacts, and probably forms a ternary complex, with MukE and MukF via its C-terminal region. The complex formation is stimulated by calcium or magnesium. Interacts with tubulin-related protein FtsZ.

Its subcellular location is the cytoplasm. It is found in the nucleoid. Functionally, plays a central role in chromosome condensation, segregation and cell cycle progression. Functions as a homodimer, which is essential for chromosome partition. Involved in negative DNA supercoiling in vivo, and by this means organize and compact chromosomes. May achieve or facilitate chromosome segregation by condensation DNA from both sides of a centrally located replisome during cell division. This is Chromosome partition protein MukB from Yersinia pestis bv. Antiqua (strain Antiqua).